Consider the following 424-residue polypeptide: Tyrosine--tRNA ligase (424 aa).

An L-tyrosine-binding site is contributed by Tyr37. The 'HIGH' region motif lies at 42–51; that stretch reads PTADSLHLGH. L-tyrosine is bound by residues Tyr175 and Gln179. A 'KMSKS' region motif is present at residues 235–239; the sequence is KFGKT. Lys238 is a binding site for ATP. The S4 RNA-binding domain occupies 357-414; sequence ADLMQALVDAELQPSRGQARKTIASNAVTINGEKQSDPEYIFNDEDRLFGRYTLLRRG.

It belongs to the class-I aminoacyl-tRNA synthetase family. TyrS type 1 subfamily. Homodimer.

The protein localises to the cytoplasm. The enzyme catalyses tRNA(Tyr) + L-tyrosine + ATP = L-tyrosyl-tRNA(Tyr) + AMP + diphosphate + H(+). Catalyzes the attachment of tyrosine to tRNA(Tyr) in a two-step reaction: tyrosine is first activated by ATP to form Tyr-AMP and then transferred to the acceptor end of tRNA(Tyr). The polypeptide is Tyrosine--tRNA ligase (Salmonella agona (strain SL483)).